Reading from the N-terminus, the 453-residue chain is Enolase (453 aa).

Residue Q163 coordinates (2R)-2-phosphoglycerate. E205 (proton donor) is an active-site residue. Mg(2+) is bound by residues D258, E308, and D335. Residues K360, R389, S390, and K411 each coordinate (2R)-2-phosphoglycerate. K360 (proton acceptor) is an active-site residue.

Belongs to the enolase family. It depends on Mg(2+) as a cofactor.

Its subcellular location is the cytoplasm. The protein localises to the secreted. It localises to the cell surface. It catalyses the reaction (2R)-2-phosphoglycerate = phosphoenolpyruvate + H2O. Its pathway is carbohydrate degradation; glycolysis; pyruvate from D-glyceraldehyde 3-phosphate: step 4/5. In terms of biological role, catalyzes the reversible conversion of 2-phosphoglycerate (2-PG) into phosphoenolpyruvate (PEP). It is essential for the degradation of carbohydrates via glycolysis. This is Enolase from Mesoplasma florum (strain ATCC 33453 / NBRC 100688 / NCTC 11704 / L1) (Acholeplasma florum).